The following is a 2350-amino-acid chain: Probable JmjC domain-containing histone demethylation protein 2C (2350 aa).

Disordered stretches follow at residues 96-302 and 314-336; these read TRAQ…LQEC and PKDR…NDTH. Over residues 98–127 the composition is skewed to polar residues; it reads AQANSPRPAMNSQAAVPKQNTHQQQQQRSI. S135 and S138 each carry phosphoserine. A compositionally biased stretch (basic and acidic residues) spans 141–160; sequence DEEKMKEDKYDCVSRGENPK. Residues 161 to 171 show a composition bias toward basic residues; that stretch reads GKNKHVVTKRR. The segment covering 172 to 189 has biased composition (basic and acidic residues); sequence KPEEAEKRLSMKRLRTDN. Positions 190–200 are enriched in low complexity; it reads ASDASESSDAE. Residues S191 and S194 each carry the phosphoserine modification. Over residues 257 to 280 the composition is skewed to basic and acidic residues; that stretch reads QEDKNHNEGEKPKSTDSHLQDKMT. The segment covering 281-302 has biased composition (polar residues); the sequence is LRSSEQATVADHNSNDSVLQEC. S294 and S320 each carry phosphoserine. Residue T324 is modified to Phosphothreonine. Phosphoserine occurs at positions 420, 436, 457, 458, 460, 471, and 762. Disordered regions lie at residues 426–486, 747–766, 859–883, 1030–1083, and 1422–1508; these read SVTE…NSQA, SSAE…PPLT, RENY…DKDV, RKES…DQSL, and EKVS…VPRS. 2 stretches are compositionally biased toward low complexity: residues 863–874 and 1034–1045; these read SRVVPSSSSPKS and SYSSLSPPTLTP. Residues 1071-1083 are compositionally biased toward polar residues; the sequence is SQSNFKNSSDQSL. The segment covering 1454-1463 has biased composition (basic residues); the sequence is KRQPKPTYKK. A compositionally biased stretch (basic and acidic residues) spans 1464–1480; that stretch reads KQNDLQKRKGEVEEDSK. The segment at 1657–1682 adopts a C6-type zinc-finger fold; sequence CDACEATLFNVHWVCRKCGFVACLDC. A compositionally biased stretch (polar residues) spans 1776–1818; it reads KTSVSLPESQQQNSPQKSQTNGNSSPGSASTDSRLTPPESQSP. Residues 1776 to 1874 are disordered; it reads KTSVSLPESQ…PASQSNEQGS (99 aa). S1800 carries the post-translational modification Phosphoserine. The segment covering 1826–1849 has biased composition (basic and acidic residues); the sequence is AEQKSREEKQENKEFTLEREIKED. Positions 1855–1874 are enriched in polar residues; the sequence is SDSPNGSTSPPASQSNEQGS. Residues 1876 to 1880 carry the LXXLL motif motif; it reads LRDLL. A disordered region spans residues 1933-1962; it reads PNKTSKINIKSEPNEEPKESSLPATDESNK. K1942 is covalently cross-linked (Glycyl lysine isopeptide (Lys-Gly) (interchain with G-Cter in SUMO2)). Residues 2084-2308 form the JmjC domain; the sequence is MPTRYEDFLR…QSFHLTQELR (225 aa). Fe cation contacts are provided by H2146, E2148, and H2276.

Belongs to the JHDM2 histone demethylase family. It depends on Fe(2+) as a cofactor.

The protein localises to the nucleus. Functionally, probable histone demethylase that specifically demethylates 'Lys-9' of histone H3, thereby playing a central role in histone code. Demethylation of Lys residue generates formaldehyde and succinate. May be involved in hormone-dependent transcriptional activation, by participating in recruitment to androgen-receptor target genes. The polypeptide is Probable JmjC domain-containing histone demethylation protein 2C (Jmjd1c) (Mus musculus (Mouse)).